We begin with the raw amino-acid sequence, 88 residues long: Small ribosomal subunit protein bS16c (88 aa).

It belongs to the bacterial ribosomal protein bS16 family.

It is found in the plastid. It localises to the chloroplast. The chain is Small ribosomal subunit protein bS16c from Citrus sinensis (Sweet orange).